Reading from the N-terminus, the 657-residue chain is Methionine--tRNA ligase (657 aa).

The 'HIGH' region motif lies at Y13–H23. Positions K308–S312 match the 'KMSKS' region motif. K311 contributes to the ATP binding site. One can recognise a tRNA-binding domain in the interval D557–K657.

It belongs to the class-I aminoacyl-tRNA synthetase family. MetG type 2B subfamily. As to quaternary structure, homodimer.

The protein localises to the cytoplasm. The catalysed reaction is tRNA(Met) + L-methionine + ATP = L-methionyl-tRNA(Met) + AMP + diphosphate. In terms of biological role, is required not only for elongation of protein synthesis but also for the initiation of all mRNA translation through initiator tRNA(fMet) aminoacylation. The chain is Methionine--tRNA ligase from Staphylococcus aureus (strain MRSA252).